The chain runs to 426 residues: Enolase (426 aa).

Q163 is a (2R)-2-phosphoglycerate binding site. Catalysis depends on E205, which acts as the Proton donor. 3 residues coordinate Mg(2+): D242, E286, and D313. (2R)-2-phosphoglycerate is bound by residues K338, R367, S368, and K389. The active-site Proton acceptor is the K338.

It belongs to the enolase family. Requires Mg(2+) as cofactor.

It localises to the cytoplasm. The protein localises to the secreted. Its subcellular location is the cell surface. The catalysed reaction is (2R)-2-phosphoglycerate = phosphoenolpyruvate + H2O. The protein operates within carbohydrate degradation; glycolysis; pyruvate from D-glyceraldehyde 3-phosphate: step 4/5. In terms of biological role, catalyzes the reversible conversion of 2-phosphoglycerate (2-PG) into phosphoenolpyruvate (PEP). It is essential for the degradation of carbohydrates via glycolysis. This chain is Enolase, found in Helicobacter pylori (strain Shi470).